We begin with the raw amino-acid sequence, 87 residues long: Small ribosomal subunit protein uS17 (87 aa).

The protein belongs to the universal ribosomal protein uS17 family. As to quaternary structure, part of the 30S ribosomal subunit.

Functionally, one of the primary rRNA binding proteins, it binds specifically to the 5'-end of 16S ribosomal RNA. This is Small ribosomal subunit protein uS17 from Heliobacterium modesticaldum (strain ATCC 51547 / Ice1).